The following is a 268-amino-acid chain: uncharacterized protein (268 aa).

This sequence belongs to the LarE family.

This is an uncharacterized protein from Synechocystis sp. (strain ATCC 27184 / PCC 6803 / Kazusa).